The primary structure comprises 143 residues: MAKKITAYIKLQVKAAQANPSPPVGPALGQHGVNIMEFCKAFNARTQGIEPGLPTPVIITVYSDRSFTFETKSTPASVLLKKAAGLTSGSARPNTVKVGTVTRAQLEDIAKAKNADLTAADMEAAVRTIAGSARSMGLNVEGV.

The protein belongs to the universal ribosomal protein uL11 family. As to quaternary structure, part of the ribosomal stalk of the 50S ribosomal subunit. Interacts with L10 and the large rRNA to form the base of the stalk. L10 forms an elongated spine to which L12 dimers bind in a sequential fashion forming a multimeric L10(L12)X complex. Post-translationally, one or more lysine residues are methylated.

In terms of biological role, forms part of the ribosomal stalk which helps the ribosome interact with GTP-bound translation factors. This Pseudomonas syringae pv. tomato (strain ATCC BAA-871 / DC3000) protein is Large ribosomal subunit protein uL11.